A 900-amino-acid polypeptide reads, in one-letter code: Isoleucine--tRNA ligase (900 aa).

A 'HIGH' region motif is present at residues 58-68 (PYANGDLHTGH). E550 is an L-isoleucyl-5'-AMP binding site. Positions 591-595 (KMSKS) match the 'KMSKS' region motif. ATP is bound at residue K594. The Zn(2+) site is built by C871, C874, C888, and C891.

The protein belongs to the class-I aminoacyl-tRNA synthetase family. IleS type 1 subfamily. In terms of assembly, monomer. The cofactor is Zn(2+).

Its subcellular location is the cytoplasm. It carries out the reaction tRNA(Ile) + L-isoleucine + ATP = L-isoleucyl-tRNA(Ile) + AMP + diphosphate. In terms of biological role, catalyzes the attachment of isoleucine to tRNA(Ile). As IleRS can inadvertently accommodate and process structurally similar amino acids such as valine, to avoid such errors it has two additional distinct tRNA(Ile)-dependent editing activities. One activity is designated as 'pretransfer' editing and involves the hydrolysis of activated Val-AMP. The other activity is designated 'posttransfer' editing and involves deacylation of mischarged Val-tRNA(Ile). The sequence is that of Isoleucine--tRNA ligase from Malacoplasma penetrans (strain HF-2) (Mycoplasma penetrans).